Consider the following 334-residue polypeptide: Ferric enterobactin transport system permease protein FepD (334 aa).

The Periplasmic segment spans residues 1–9 (MSGSVAVTR). A helical transmembrane segment spans residues 10–30 (AIAVPGLLLLLIIATALSLLI). The Cytoplasmic segment spans residues 31-63 (GAKSLPASVVLEAFSGTCQSADCTIVLDARLPR). Residues 64 to 84 (TLAGLLAGGALGLAGALMQTL) traverse the membrane as a helical segment. The Periplasmic portion of the chain corresponds to 85–92 (TRNPLADP). Residues 93-113 (GLLGVNAGASFAIVLGAALFG) form a helical membrane-spanning segment. Residues 114–120 (YSSAQEQ) lie on the Cytoplasmic side of the membrane. Residues 121–141 (LAMAFAGALVASLIVAFTGSQ) traverse the membrane as a helical segment. Residues 142-151 (GGGQLSPVRL) are Periplasmic-facing. The chain crosses the membrane as a helical span at residues 152–172 (TLAGVALAAVLEGLTSGIALL). Residues 173–192 (NPDVYDQLRFWQAGSLDIRN) lie on the Cytoplasmic side of the membrane. A helical membrane pass occupies residues 193 to 213 (LHTLKVVLIPVLIAGATALLL). Over 214–241 (SRALNSLSLGSDTATALGSRVARTQLIG) the chain is Periplasmic. A helical transmembrane segment spans residues 242–262 (LLAITVLCGSATAIVGPIAFI). Topologically, residues 263–279 (GLMMPHMARWLVGADHR) are cytoplasmic. A helical membrane pass occupies residues 280-300 (WSLPVTLLATPALLLFADIIG). Topologically, residues 301–305 (RVIVP) are periplasmic. A helical membrane pass occupies residues 306–326 (GELRVSVVSAFIGAPVLIFLV). The Cytoplasmic portion of the chain corresponds to 327–334 (RRKTRGGA).

It belongs to the binding-protein-dependent transport system permease family. FecCD subfamily. The complex is composed of two ATP-binding proteins (FepC), two transmembrane proteins (FepD and FepG) and a solute-binding protein (FepB).

Its subcellular location is the cell inner membrane. In terms of biological role, part of the ABC transporter complex FepBDGC involved in ferric enterobactin uptake. Responsible for the translocation of the substrate across the membrane. The chain is Ferric enterobactin transport system permease protein FepD (fepD) from Escherichia coli (strain K12).